Here is a 262-residue protein sequence, read N- to C-terminus: Small ribosomal subunit protein eS1y (262 aa).

Residues 1 to 18 (MAVGKNKRISKGRKGGKK) are compositionally biased toward basic residues. The tract at residues 1–21 (MAVGKNKRISKGRKGGKKKAV) is disordered.

The protein belongs to the eukaryotic ribosomal protein eS1 family. Component of the small ribosomal subunit. Mature ribosomes consist of a small (40S) and a large (60S) subunit. The 40S subunit contains about 33 different proteins and 1 molecule of RNA (18S). The 60S subunit contains about 49 different proteins and 3 molecules of RNA (25S, 5.8S and 5S).

The protein resides in the cytoplasm. This Arabidopsis thaliana (Mouse-ear cress) protein is Small ribosomal subunit protein eS1y.